The chain runs to 523 residues: Membrane protein PTM1 (523 aa).

The signal sequence occupies residues 1-26 (MRVYQFCRPFQLFTYFLCYLLVFVKA). Topologically, residues 27–197 (NKEKISQKNY…LAGTEINKLP (171 aa)) are lumenal. N132 carries an N-linked (GlcNAc...) asparagine glycan. Residues 198-218 (LYGLLAVAYVVAMALYSFAFW) form a helical membrane-spanning segment. Residues 219 to 230 (KHKHELLPLQKY) lie on the Cytoplasmic side of the membrane. The chain crosses the membrane as a helical span at residues 231-251 (LLAFFVFLTAETIFVWAYYDL). The Lumenal portion of the chain corresponds to 252–265 (KNEKGDTAGIKVYM). The chain crosses the membrane as a helical span at residues 266-286 (VFLSILTAGKVTFSFFLLLII). At 287–304 (ALGYGIVYPKLNKTLMRR) the chain is on the cytoplasmic side. Residues 305-325 (CQMYGALTYAICIGFLIQSYL) form a helical membrane-spanning segment. Residues 326–333 (TDMEAPSP) lie on the Lumenal side of the membrane. Residues 334–354 (LILITLIPMALALIIFYYMII) form a helical membrane-spanning segment. The Cytoplasmic portion of the chain corresponds to 355 to 381 (RSMTKTVIYLKEQRQIVKLNMYKKLLY). The helical transmembrane segment at 382 to 402 (IIYASFLSVLAGSIVSSFIYV) threads the bilayer. At 403 to 417 (GMNTIDMIEKNWRSR) the chain is on the lumenal side. A helical transmembrane segment spans residues 418-438 (FFVTDFWPTLVYFIVFVTIAF). At 439–523 (LWRPTDTSYM…HGPVSPSPTK (85 aa)) the chain is on the cytoplasmic side. The residue at position 480 (S480) is a Phosphoserine. 2 positions are modified to phosphothreonine: T483 and T498. The segment at 483 to 523 (TGERGIDEDDLNLNFTDDEEGHDNVNNHSQGHGPVSPSPTK) is disordered. A compositionally biased stretch (acidic residues) spans 488–503 (IDEDDLNLNFTDDEEG).

This sequence belongs to the LU7TM family.

Its subcellular location is the golgi apparatus membrane. The protein resides in the early endosome membrane. The polypeptide is Membrane protein PTM1 (PTM1) (Saccharomyces cerevisiae (strain YJM789) (Baker's yeast)).